A 118-amino-acid polypeptide reads, in one-letter code: Small ribosomal subunit protein uS13 (118 aa).

The tract at residues 94-118 (SLPLRGQRTKTNARTRKGPRKPIKK) is disordered.

It belongs to the universal ribosomal protein uS13 family. Part of the 30S ribosomal subunit. Forms a loose heterodimer with protein S19. Forms two bridges to the 50S subunit in the 70S ribosome.

Functionally, located at the top of the head of the 30S subunit, it contacts several helices of the 16S rRNA. In the 70S ribosome it contacts the 23S rRNA (bridge B1a) and protein L5 of the 50S subunit (bridge B1b), connecting the 2 subunits; these bridges are implicated in subunit movement. Contacts the tRNAs in the A and P-sites. In Shewanella amazonensis (strain ATCC BAA-1098 / SB2B), this protein is Small ribosomal subunit protein uS13.